The following is a 321-amino-acid chain: Lipoyl synthase (321 aa).

Residues Cys-68, Cys-73, Cys-79, Cys-94, Cys-98, Cys-101, and Ser-308 each coordinate [4Fe-4S] cluster. Residues 80–297 (FNHGTATFMI…KAEALAMGFT (218 aa)) enclose the Radical SAM core domain.

The protein belongs to the radical SAM superfamily. Lipoyl synthase family. [4Fe-4S] cluster serves as cofactor.

Its subcellular location is the cytoplasm. It catalyses the reaction [[Fe-S] cluster scaffold protein carrying a second [4Fe-4S](2+) cluster] + N(6)-octanoyl-L-lysyl-[protein] + 2 oxidized [2Fe-2S]-[ferredoxin] + 2 S-adenosyl-L-methionine + 4 H(+) = [[Fe-S] cluster scaffold protein] + N(6)-[(R)-dihydrolipoyl]-L-lysyl-[protein] + 4 Fe(3+) + 2 hydrogen sulfide + 2 5'-deoxyadenosine + 2 L-methionine + 2 reduced [2Fe-2S]-[ferredoxin]. It participates in protein modification; protein lipoylation via endogenous pathway; protein N(6)-(lipoyl)lysine from octanoyl-[acyl-carrier-protein]: step 2/2. Catalyzes the radical-mediated insertion of two sulfur atoms into the C-6 and C-8 positions of the octanoyl moiety bound to the lipoyl domains of lipoate-dependent enzymes, thereby converting the octanoylated domains into lipoylated derivatives. The chain is Lipoyl synthase from Salmonella paratyphi A (strain AKU_12601).